The sequence spans 299 residues: N-acetylmuramic acid 6-phosphate etherase (299 aa).

The SIS domain occupies 57 to 220; that stretch reads ISAAFHKKGR…TTGAMIRTGK (164 aa). Glu-85 acts as the Proton donor in catalysis. The active site involves Glu-116.

This sequence belongs to the GCKR-like family. MurNAc-6-P etherase subfamily. As to quaternary structure, homodimer.

The catalysed reaction is N-acetyl-D-muramate 6-phosphate + H2O = N-acetyl-D-glucosamine 6-phosphate + (R)-lactate. It functions in the pathway amino-sugar metabolism; 1,6-anhydro-N-acetylmuramate degradation. The protein operates within amino-sugar metabolism; N-acetylmuramate degradation. It participates in cell wall biogenesis; peptidoglycan recycling. Specifically catalyzes the cleavage of the D-lactyl ether substituent of MurNAc 6-phosphate, producing GlcNAc 6-phosphate and D-lactate. Together with AnmK, is also required for the utilization of anhydro-N-acetylmuramic acid (anhMurNAc) either imported from the medium or derived from its own cell wall murein, and thus plays a role in cell wall recycling. This chain is N-acetylmuramic acid 6-phosphate etherase, found in Psychromonas ingrahamii (strain DSM 17664 / CCUG 51855 / 37).